Consider the following 244-residue polypeptide: Biosynthetic peptidoglycan transglycosylase (244 aa).

Residues 23–43 (LVVIGAWLAGILLFSFLPVPF) traverse the membrane as a helical segment.

It belongs to the glycosyltransferase 51 family.

The protein resides in the cell inner membrane. It catalyses the reaction [GlcNAc-(1-&gt;4)-Mur2Ac(oyl-L-Ala-gamma-D-Glu-L-Lys-D-Ala-D-Ala)](n)-di-trans,octa-cis-undecaprenyl diphosphate + beta-D-GlcNAc-(1-&gt;4)-Mur2Ac(oyl-L-Ala-gamma-D-Glu-L-Lys-D-Ala-D-Ala)-di-trans,octa-cis-undecaprenyl diphosphate = [GlcNAc-(1-&gt;4)-Mur2Ac(oyl-L-Ala-gamma-D-Glu-L-Lys-D-Ala-D-Ala)](n+1)-di-trans,octa-cis-undecaprenyl diphosphate + di-trans,octa-cis-undecaprenyl diphosphate + H(+). It functions in the pathway cell wall biogenesis; peptidoglycan biosynthesis. Functionally, peptidoglycan polymerase that catalyzes glycan chain elongation from lipid-linked precursors. The sequence is that of Biosynthetic peptidoglycan transglycosylase from Pectobacterium carotovorum subsp. carotovorum (strain PC1).